The primary structure comprises 443 residues: Xaa-Pro dipeptidase (443 aa).

Asp246, Asp257, His339, Glu384, and Glu423 together coordinate Mn(2+).

Belongs to the peptidase M24B family. Bacterial-type prolidase subfamily. It depends on Mn(2+) as a cofactor.

The enzyme catalyses Xaa-L-Pro dipeptide + H2O = an L-alpha-amino acid + L-proline. Its function is as follows. Splits dipeptides with a prolyl residue in the C-terminal position. This is Xaa-Pro dipeptidase from Escherichia fergusonii (strain ATCC 35469 / DSM 13698 / CCUG 18766 / IAM 14443 / JCM 21226 / LMG 7866 / NBRC 102419 / NCTC 12128 / CDC 0568-73).